The sequence spans 404 residues: Serine/threonine transporter SstT (404 aa).

9 helical membrane passes run 17-37 (IGIG…VTAI), 44-64 (FVGA…VQAI), 75-95 (MTLI…VAVI), 138-158 (ALAT…GLAL), 179-199 (IVVW…FSTV), 212-232 (LLIL…NPLL), 287-307 (IPLG…VLTL), 319-339 (FLTA…ASGV), and 354-374 (FGIS…VGVI).

The protein belongs to the dicarboxylate/amino acid:cation symporter (DAACS) (TC 2.A.23) family.

It is found in the cell membrane. The catalysed reaction is L-serine(in) + Na(+)(in) = L-serine(out) + Na(+)(out). The enzyme catalyses L-threonine(in) + Na(+)(in) = L-threonine(out) + Na(+)(out). Its function is as follows. Involved in the import of serine and threonine into the cell, with the concomitant import of sodium (symport system). The polypeptide is Serine/threonine transporter SstT (Streptococcus equi subsp. zooepidemicus (strain H70)).